A 169-amino-acid chain; its full sequence is Interleukin-2 (169 aa).

Positions 1-20 are cleaved as a signal peptide; the sequence is MYSMQLASCVTLTLVLLVNS. Threonine 23 carries an O-linked (GalNAc...) threonine glycan. Cysteine 92 and cysteine 140 are disulfide-bonded.

This sequence belongs to the IL-2 family. As to expression, produced by immune cells including dendritic cells. In contrast, macrophages do not produce IL2 upon bacterial stimulation.

It is found in the secreted. Its function is as follows. Cytokine produced by activated CD4-positive helper T-cells and to a lesser extend activated CD8-positive T-cells and natural killer (NK) cells that plays pivotal roles in the immune response and tolerance. Binds to a receptor complex composed of either the high-affinity trimeric IL-2R (IL2RA/CD25, IL2RB/CD122 and IL2RG/CD132) or the low-affinity dimeric IL-2R (IL2RB and IL2RG). Interaction with the receptor leads to oligomerization and conformation changes in the IL-2R subunits resulting in downstream signaling starting with phosphorylation of JAK1 and JAK3. In turn, JAK1 and JAK3 phosphorylate the receptor to form a docking site leading to the phosphorylation of several substrates including STAT5. This process leads to activation of several pathways including STAT, phosphoinositide-3-kinase/PI3K and mitogen-activated protein kinase/MAPK pathways. Functions as a T-cell growth factor and can increase NK-cell cytolytic activity as well. Promotes strong proliferation of activated B-cells and subsequently immunoglobulin production. Plays a pivotal role in regulating the adaptive immune system by controlling the survival and proliferation of regulatory T-cells, which are required for the maintenance of immune tolerance. Moreover, participates in the differentiation and homeostasis of effector T-cell subsets, including Th1, Th2, Th17 as well as memory CD8-positive T-cells. This is Interleukin-2 (Il2) from Mus musculus (Mouse).